The sequence spans 179 residues: Endoribonuclease YbeY (179 aa).

Positions 148, 152, and 158 each coordinate Zn(2+).

The protein belongs to the endoribonuclease YbeY family. Zn(2+) is required as a cofactor.

It localises to the cytoplasm. Single strand-specific metallo-endoribonuclease involved in late-stage 70S ribosome quality control and in maturation of the 3' terminus of the 16S rRNA. This chain is Endoribonuclease YbeY, found in Prochlorococcus marinus (strain MIT 9312).